Reading from the N-terminus, the 130-residue chain is MTTQRKPYVRTMTPTWWQKLGFYRFYMLREGTSVPAVWFSIVLIYGVFALKGGVDSWAGFVGFLQNPLVLLINFVALLAALLHTKTWFDLAPKAANIVVNSEKMGPGPIVKTLWAVTVVASVVILAVALV.

The next 3 helical transmembrane spans lie at 34–54 (VPAV…KGGV), 60–80 (FVGF…LLAA), and 109–129 (IVKT…AVAL).

This sequence belongs to the FrdC family. Part of an enzyme complex containing four subunits: a flavoprotein (FrdA), an iron-sulfur protein (FrdB), and two hydrophobic anchor proteins (FrdC and FrdD).

It is found in the cell inner membrane. Its function is as follows. Two distinct, membrane-bound, FAD-containing enzymes are responsible for the catalysis of fumarate and succinate interconversion; fumarate reductase is used in anaerobic growth, and succinate dehydrogenase is used in aerobic growth. Anchors the catalytic components of the fumarate reductase complex to the cell inner membrane, binds quinones. The chain is Fumarate reductase subunit C from Serratia proteamaculans (strain 568).